Consider the following 304-residue polypeptide: L-xylo-3-hexulose reductase (304 aa).

Positions 19, 68, and 107 each coordinate NADP(+). Active-site proton donor residues include Ser-163 and Ser-164. NADP(+) is bound by residues Tyr-177, Lys-181, and Ala-209. Tyr-177 serves as the catalytic Proton acceptor. Catalysis depends on Lys-181, which acts as the Lowers pKa of active site Tyr.

This sequence belongs to the short-chain dehydrogenases/reductases (SDR) family.

The catalysed reaction is D-sorbitol + NADP(+) = L-xylo-3-hexulose + NADPH + H(+). Its pathway is carbohydrate degradation. L-xylulose reductase involved in the catabolism of D-galactose through an oxidoreductive pathway. Catalyzes the NADPH-dependent reduction of L-xylo-3-hexulose. Is also active with D-ribulose and L-xylulose, and to a lesser extent with D-xylulose, D-fructose and L- and D-sorbose. In the reverse reaction, shows activity with D-sorbitol and D-mannitol, low activity with xylitol, but no activity with galactitol, ribitol, and L- and D-arabitol. This is L-xylo-3-hexulose reductase from Hypocrea jecorina (strain QM6a) (Trichoderma reesei).